Reading from the N-terminus, the 61-residue chain is Early E3 6.4 kDa protein (61 aa).

Positions 1 to 25 (MGNAGPLKLHTITKPGTIPYPPHGS) are disordered.

The protein is Early E3 6.4 kDa protein of Homo sapiens (Human).